A 190-amino-acid polypeptide reads, in one-letter code: Potassium-transporting ATPase KdpC subunit (190 aa).

A helical transmembrane segment spans residues Thr10 to Gly30.

Belongs to the KdpC family. The system is composed of three essential subunits: KdpA, KdpB and KdpC.

Its subcellular location is the cell inner membrane. In terms of biological role, part of the high-affinity ATP-driven potassium transport (or Kdp) system, which catalyzes the hydrolysis of ATP coupled with the electrogenic transport of potassium into the cytoplasm. This subunit acts as a catalytic chaperone that increases the ATP-binding affinity of the ATP-hydrolyzing subunit KdpB by the formation of a transient KdpB/KdpC/ATP ternary complex. The sequence is that of Potassium-transporting ATPase KdpC subunit from Escherichia coli O127:H6 (strain E2348/69 / EPEC).